A 144-amino-acid chain; its full sequence is 3-hydroxyacyl-[acyl-carrier-protein] dehydratase FabZ (144 aa).

The active site involves His51.

Belongs to the thioester dehydratase family. FabZ subfamily.

The protein resides in the cytoplasm. The enzyme catalyses a (3R)-hydroxyacyl-[ACP] = a (2E)-enoyl-[ACP] + H2O. Involved in unsaturated fatty acids biosynthesis. Catalyzes the dehydration of short chain beta-hydroxyacyl-ACPs and long chain saturated and unsaturated beta-hydroxyacyl-ACPs. The sequence is that of 3-hydroxyacyl-[acyl-carrier-protein] dehydratase FabZ from Lactococcus lactis subsp. cremoris (strain MG1363).